The chain runs to 640 residues: Threonine--tRNA ligase (640 aa).

Residues 1–61 enclose the TGS domain; it reads MPIITLPNGD…TEDATLQIIT (61 aa). The segment at 242–533 is catalytic; that stretch reads DHRKIGKALD…LIEHYAGFMP (292 aa). Zn(2+) is bound by residues cysteine 333, histidine 384, and histidine 510.

It belongs to the class-II aminoacyl-tRNA synthetase family. In terms of assembly, homodimer. Zn(2+) serves as cofactor.

It is found in the cytoplasm. It carries out the reaction tRNA(Thr) + L-threonine + ATP = L-threonyl-tRNA(Thr) + AMP + diphosphate + H(+). Catalyzes the attachment of threonine to tRNA(Thr) in a two-step reaction: L-threonine is first activated by ATP to form Thr-AMP and then transferred to the acceptor end of tRNA(Thr). Also edits incorrectly charged L-seryl-tRNA(Thr). This Acinetobacter baylyi (strain ATCC 33305 / BD413 / ADP1) protein is Threonine--tRNA ligase.